The chain runs to 263 residues: Thymidylate kinase (263 aa).

The N-terminal 51 residues, 1-51 (MKRICSVSSVQLFSRSFRALASPRSLNYPLQCIKRSSVRMESSNFSSGVRT), are a transit peptide targeting the mitochondrion. ATP is bound at residue 66–74 (GLDRSGKST).

The protein belongs to the thymidylate kinase family. Expressed in root, rosette leaves, flower buds, flowers and siliques.

It is found in the mitochondrion. The protein localises to the cytoplasm. Its subcellular location is the nucleus. The protein resides in the nucleoplasm. The catalysed reaction is dTMP + ATP = dTDP + ADP. It functions in the pathway pyrimidine metabolism; dTTP biosynthesis. Functionally, catalyzes the conversion of dTMP to dTDP. Involved in the regulation of DNA replication. Is essential to promote the first division of the zygote. This Arabidopsis thaliana (Mouse-ear cress) protein is Thymidylate kinase.